Reading from the N-terminus, the 822-residue chain is Ribonucleoside-diphosphate reductase large subunit (822 aa).

Substrate contacts are provided by residues threonine 249, 264-265 (SC), glycine 295, 470-474 (NLCTE), and 651-655 (PTAAS). A disulfide bond links cysteine 265 and cysteine 487. Residue asparagine 470 is the Proton acceptor of the active site. The Cysteine radical intermediate role is filled by cysteine 472. Catalysis depends on glutamate 474, which acts as the Proton acceptor.

The protein belongs to the ribonucleoside diphosphate reductase large chain family. Heterotetramer composed of a homodimer of the large subunit (R1) and a homodimer of the small subunit (R2). Larger multisubunit protein complex are also active, composed of (R1)n(R2)n.

The catalysed reaction is a 2'-deoxyribonucleoside 5'-diphosphate + [thioredoxin]-disulfide + H2O = a ribonucleoside 5'-diphosphate + [thioredoxin]-dithiol. Ribonucleoside-diphosphate reductase holoenzyme provides the precursors necessary for viral DNA synthesis. Allows virus growth in non-dividing cells, as well as reactivation from latency in infected hosts. Catalyzes the biosynthesis of deoxyribonucleotides from the corresponding ribonucleotides. The protein is Ribonucleoside-diphosphate reductase large subunit of Gallus gallus (Chicken).